A 157-amino-acid chain; its full sequence is Endoribonuclease YbeY (157 aa).

H114, H118, and H124 together coordinate Zn(2+).

Belongs to the endoribonuclease YbeY family. Requires Zn(2+) as cofactor.

Its subcellular location is the cytoplasm. In terms of biological role, single strand-specific metallo-endoribonuclease involved in late-stage 70S ribosome quality control and in maturation of the 3' terminus of the 16S rRNA. This Klebsiella pneumoniae (strain 342) protein is Endoribonuclease YbeY.